A 762-amino-acid polypeptide reads, in one-letter code: Ribosome-releasing factor 2, mitochondrial (762 aa).

Residues 1-35 constitute a mitochondrion transit peptide; it reads MLLSLTFPVLRGCTGHLVNRSLQAPRWRVTWKRSY. Residues 54–341 enclose the tr-type G domain; the sequence is SKIRNIGIMA…AITAYLPAPN (288 aa). GTP contacts are provided by residues 63 to 70, 127 to 131, and 181 to 184; these read AHIDAGKT, DTPGH, and NKMD.

Belongs to the TRAFAC class translation factor GTPase superfamily. Classic translation factor GTPase family. EF-G/EF-2 subfamily.

The protein localises to the mitochondrion. The catalysed reaction is GTP + H2O = GDP + phosphate + H(+). In terms of biological role, mitochondrial GTPase that mediates the disassembly of ribosomes from messenger RNA at the termination of mitochondrial protein biosynthesis. Acts in collaboration with mrrf. GTP hydrolysis follows the ribosome disassembly and probably occurs on the ribosome large subunit. Not involved in the GTP-dependent ribosomal translocation step during translation elongation. The polypeptide is Ribosome-releasing factor 2, mitochondrial (gfm2) (Danio rerio (Zebrafish)).